We begin with the raw amino-acid sequence, 134 residues long: MKAIYLILTVLCGFSASTKTGGWRDKDVDDEDIRKFATLAASENSKMSNSLYFEKLVKVIEAKSQVVSGVKYNITFEIAPTECKKNGKGYDKLSECPLLESAPHQTCTAIIWTRSWLNDTQILKLKCKEGGSSC.

The N-terminal stretch at 1–17 (MKAIYLILTVLCGFSAS) is a signal peptide. Residues 21–116 (GGWRDKDVDD…CTAIIWTRSW (96 aa)) enclose the Cystatin domain. Positions 65-69 (QVVSG) match the Secondary area of contact motif. Cystine bridges form between Cys-83–Cys-96 and Cys-107–Cys-127.

Belongs to the cystatin family. Expressed by the venom gland.

The protein localises to the secreted. Its function is as follows. Inhibits various C1 cysteine proteases. This protein has no toxic activity and its function in the venom is unknown. It may play a role as a housekeeping or regulatory protein. This Chilobrachys guangxiensis (Chinese earth tiger tarantula) protein is Cystatin-1.